The sequence spans 267 residues: Collectin-11 (267 aa).

A signal peptide spans 1–21; the sequence is MKRALALMGLAFLCVLRAGAA. The tract at residues 40 to 109 is disordered; sequence GDAGEKGDKG…GPNGEPGIPC (70 aa). Composition is skewed to basic and acidic residues over residues 41 to 50 and 62 to 71; these read DAGEKGDKGA and EKGDVGDKGQ. The 60-residue stretch at 49–108 folds into the Collagen-like domain; it reads GAPGRPGRVGPTGEKGDVGDKGQKGGVGRHGKIGPIGSKGEKGDSGDIGPPGPNGEPGIP. Positions 110–144 form a coiled coil; sequence ECSQLRKAIGEMDNQVTQLTAELKFIKNAVAGVRE. One can recognise a C-type lectin domain in the interval 145–261; that stretch reads TEQKMYLLVK…CHLTMHFLCE (117 aa). Intrachain disulfides connect cysteine 166/cysteine 260 and cysteine 238/cysteine 252. Position 196 (arginine 196) interacts with a carbohydrate. Ca(2+) contacts are provided by aspartate 203, glutamate 207, glutamate 228, asparagine 230, asparagine 231, aspartate 234, glutamate 236, and aspartate 237. A carbohydrate is bound at residue glutamate 236. A carbohydrate is bound by residues glutamate 240 and 248 to 250; that span reads NDV. Asparagine 248 and aspartate 249 together coordinate Ca(2+).

This sequence belongs to the COLEC10/COLEC11 family. Homotrimer; disulfide-linked. Interacts with MASP1; probably triggers the lectin pathway of complement.

The protein resides in the secreted. Lectin that plays a role in innate immunity, apoptosis and embryogenesis. Calcium-dependent lectin that binds self and non-self glycoproteins presenting high mannose oligosaccharides with at least one terminal alpha-1,2-linked mannose epitope. Primarily recognizes the terminal disaccharide of the glycan. Also recognizes a subset of fucosylated glycans and lipopolysaccharides. Plays a role in innate immunity through its ability to bind non-self sugars presented by microorganisms and to activate the complement through the recruitment of MAPS1. Also plays a role in apoptosis through its ability to bind in a calcium-independent manner the DNA present at the surface of apoptotic cells and to activate the complement in response to this binding. Finally, plays a role in development, probably serving as a guidance cue during the migration of neural crest cells and other cell types during embryogenesis. The polypeptide is Collectin-11 (COLEC11) (Bos taurus (Bovine)).